A 100-amino-acid polypeptide reads, in one-letter code: MQLTPHEQERLLIHVAADVAEKRRARGVKLNHPEVVALITAHILEGARDGRSVGELMSSGRKLIQRDEVMEGIPEMIHDVQVEATFPDGTKLVTVHEPII.

The protein belongs to the urease gamma subunit family. As to quaternary structure, heterotrimer of UreA (gamma), UreB (beta) and UreC (alpha) subunits. Three heterotrimers associate to form the active enzyme.

It localises to the cytoplasm. It catalyses the reaction urea + 2 H2O + H(+) = hydrogencarbonate + 2 NH4(+). Its pathway is nitrogen metabolism; urea degradation; CO(2) and NH(3) from urea (urease route): step 1/1. The sequence is that of Urease subunit gamma from Streptomyces coelicolor (strain ATCC BAA-471 / A3(2) / M145).